A 589-amino-acid polypeptide reads, in one-letter code: Early growth response protein 4 (589 aa).

Disordered stretches follow at residues 29-101 (GSAL…HSRR), 383-411 (AEGLPGLLTPPSGEGGSSGDGGEFLASTQ), and 436-466 (PGSSGVAAPPVPPPPPTPFPQAKARRKGRRG). Over residues 76 to 86 (PLPPASPPPAR) the composition is skewed to pro residues. Positions 92–101 (ARPRAPHSRR) are enriched in basic residues. A compositionally biased stretch (gly residues) spans 395 to 404 (GEGGSSGDGG). Residues 444 to 454 (PPVPPPPPTPF) show a composition bias toward pro residues. 3 C2H2-type zinc fingers span residues 483-507 (FACPVESCVRSFARSDELNRHLRIH), 513-535 (FQCRICLRNFSRSDHLTTHVRTH), and 541-563 (FACDVCGRRFARSDEKKRHSKVH).

It belongs to the EGR C2H2-type zinc-finger protein family.

The protein localises to the nucleus. Functionally, transcriptional regulator. Recognizes and binds to the DNA sequence 5'-GCGGGGGCG-3' (GSG). Activates the transcription of target genes whose products are required for mitogenesis and differentiation. This is Early growth response protein 4 (EGR4) from Homo sapiens (Human).